The chain runs to 567 residues: Glutamine-dependent NAD(+) synthetase (567 aa).

The region spanning 2–242 (LNLTLAQLNF…EDILTVTLDL (241 aa)) is the CN hydrolase domain. Glu-41 serves as the catalytic Proton acceptor; for glutaminase activity. Lys-109 serves as the catalytic For glutaminase activity. Residue Tyr-115 participates in L-glutamine binding. Residue Cys-145 is the Nucleophile; for glutaminase activity of the active site. Residues Ser-172 and Lys-178 each coordinate L-glutamine. The segment at 287–567 (PKEEEEIYAA…RMPVTNKFFK (281 aa)) is ligase. 316–323 (GLSGGIDS) contributes to the ATP binding site. Asn-399 serves as a coordination point for deamido-NAD(+). Thr-423 is a binding site for ATP. Deamido-NAD(+)-binding residues include Glu-428 and Lys-538.

This sequence in the C-terminal section; belongs to the NAD synthetase family.

The enzyme catalyses deamido-NAD(+) + L-glutamine + ATP + H2O = L-glutamate + AMP + diphosphate + NAD(+) + H(+). It participates in cofactor biosynthesis; NAD(+) biosynthesis; NAD(+) from deamido-NAD(+) (L-Gln route): step 1/1. Functionally, catalyzes the ATP-dependent amidation of deamido-NAD to form NAD. Uses L-glutamine as a nitrogen source. The sequence is that of Glutamine-dependent NAD(+) synthetase from Aquifex aeolicus (strain VF5).